Reading from the N-terminus, the 98-residue chain is NADH-ubiquinone oxidoreductase chain 4L (98 aa).

3 consecutive transmembrane segments (helical) span residues 2–22, 26–46, and 59–79; these read TSAFLNLTMAFTLSLLGTFMF, LMSTLLCLEGMMLSLFVMTST, and IPITILVFAACEAAVGLALLV.

It belongs to the complex I subunit 4L family. In terms of assembly, core subunit of respiratory chain NADH dehydrogenase (Complex I) which is composed of 45 different subunits.

It is found in the mitochondrion inner membrane. The catalysed reaction is a ubiquinone + NADH + 5 H(+)(in) = a ubiquinol + NAD(+) + 4 H(+)(out). In terms of biological role, core subunit of the mitochondrial membrane respiratory chain NADH dehydrogenase (Complex I) which catalyzes electron transfer from NADH through the respiratory chain, using ubiquinone as an electron acceptor. Part of the enzyme membrane arm which is embedded in the lipid bilayer and involved in proton translocation. The chain is NADH-ubiquinone oxidoreductase chain 4L from Rattus norvegicus (Rat).